We begin with the raw amino-acid sequence, 444 residues long: Docking protein 3 (444 aa).

The PH domain maps to 7 to 123 (PVKDGLLYQQ…WMDPICQLAF (117 aa)). A disordered region spans residues 47 to 66 (DVRDGGLGPGGDRPAGPGRR). Ser-138 carries the post-translational modification Phosphoserine. Residues 157 to 261 (EVAEFPVVVQ…ARQRERLPEL (105 aa)) form the IRS-type PTB domain. Phosphoserine is present on residues Ser-274, Ser-308, and Ser-314. Tyr-325 is subject to Phosphotyrosine. Positions 354 to 390 (GLSNGGPEAQEGPPGGRSPLGSPIYHNSEELSWPGSA) are disordered. Residues 358-376 (GGPEAQEGPPGGRSPLGSP) show a composition bias toward low complexity. Ser-371 carries the post-translational modification Phosphoserine.

It belongs to the DOK family. Type A subfamily. On tyrosine phosphorylation, interacts with CSK and INPP5D/SHIP1 via their SH2 domains. Binds ABL1 through the PTB domain and in a kinase-dependent manner. Does not interact with RasGAP. In terms of processing, constitutively tyrosine-phosphorylated. Post-translationally, on IL2 stimulation, phosphorylated on C-terminal tyrosine residues possibly by Src kinases. Can also be phosphorylated by ABL1 kinase.

It localises to the cytoplasm. The protein resides in the cell membrane. Its function is as follows. DOK proteins are enzymatically inert adaptor or scaffolding proteins. They provide a docking platform for the assembly of multimolecular signaling complexes. DOK3 is a negative regulator of JNK signaling in B-cells through interaction with INPP5D/SHIP1. May modulate ABL1 function. This chain is Docking protein 3 (Dok3), found in Rattus norvegicus (Rat).